The chain runs to 467 residues: Calcium-binding protein P (467 aa).

Pro residues-rich tracts occupy residues 1–10 (MQNPQNPPPA) and 45–62 (QYPP…PPYP). The tract at residues 1-311 (MQNPQNPPPA…GAYPGQPPMG (311 aa)) is disordered. Residues 45–49 (QYPPQ) carry the XYPPX motif. Low complexity predominate over residues 63–74 (GTQQPGAPGAPG). 17 short sequence motifs (XYPPX) span residues 75–79 (QYPPQ), 83–87 (QYPPQ), 94–98 (QYPPQ), 104–108 (GYPPQ), 115–119 (QYPPQ), 125–129 (GYPPQ), 136–140 (QYPPQ), 146–150 (QYPPQ), 157–161 (QYPPQ), 165–169 (QYPPQ), 176–180 (AYPPQ), 187–191 (AYPPQ), 221–225 (GVPPQ), 238–242 (AYPPQ), 247–251 (AYPPQ), 256–260 (AYPPQ), and 275–279 (AYPPQ). Pro residues-rich tracts occupy residues 75-109 (QYPP…PPQQ) and 118-131 (PQQP…PQQP). The span at 132-145 (GAPGQYPPQQGQPG) shows a compositional bias: low complexity. 2 stretches are compositionally biased toward low complexity: residues 153–193 (GQPG…PQQG) and 215–246 (AYPG…GQPG). Residues 253 to 311 (QPGAYPPQQQQVAYPGQQPPMGAYPPQQGAYPGQQGAYPGQQGAYPGQQGAYPGQPPMG) show a composition bias toward low complexity. EF-hand domains follow at residues 399 to 434 (QKMM…LGYY) and 435 to 467 (FSKG…WSMQ). Ca(2+)-binding residues include Asp-412, Asn-414, Ser-416, Thr-418, and Glu-423.

This is Calcium-binding protein P (cbpP) from Dictyostelium discoideum (Social amoeba).